Reading from the N-terminus, the 200-residue chain is SKP1-like protein 19 (200 aa).

Basic and acidic residues predominate over residues D67–D92. The disordered stretch occupies residues D67–K109. Residues I132 to E190 are interaction with the F-box domain of F-box proteins.

The protein belongs to the SKP1 family. In terms of assembly, part of a SCF (SKP1-cullin-F-box) protein ligase complex. Interacts with CPR1/CPR30. In terms of tissue distribution, expressed in leaves and flowers.

The protein resides in the nucleus. The protein operates within protein modification; protein ubiquitination. Functionally, involved in ubiquitination and subsequent proteasomal degradation of target proteins. Together with CUL1, RBX1 and a F-box protein, it forms a SCF E3 ubiquitin ligase complex. The functional specificity of this complex depends on the type of F-box protein. In the SCF complex, it serves as an adapter that links the F-box protein to CUL1. The polypeptide is SKP1-like protein 19 (ASK19) (Arabidopsis thaliana (Mouse-ear cress)).